Here is a 351-residue protein sequence, read N- to C-terminus: Photosystem II D2 protein (351 aa).

A helical transmembrane segment spans residues 39–59; it reads TAYLAVGGWFTGTTFVTSWYT. Histidine 116 contributes to the chlorophyll a binding site. A helical membrane pass occupies residues 123 to 139; the sequence is GFCLRQFEIARLVGIRP. Pheophytin a is bound by residues glutamine 128 and asparagine 141. A helical membrane pass occupies residues 151-164; the sequence is IFVSVFLLYPLGQA. Histidine 196 contacts chlorophyll a. The helical transmembrane segment at 206 to 226 threads the bilayer; sequence GALLCAIHGATVENTLFEDGD. A plastoquinone is bound by residues histidine 213 and phenylalanine 260. A Fe cation-binding site is contributed by histidine 213. Histidine 267 provides a ligand contact to Fe cation. Residues 277–293 form a helical membrane-spanning segment; it reads GLWTSAIGIVGLALNLR.

It belongs to the reaction center PufL/M/PsbA/D family. PSII is composed of 1 copy each of membrane proteins PsbA, PsbB, PsbC, PsbD, PsbE, PsbF, PsbH, PsbI, PsbJ, PsbK, PsbL, PsbM, PsbT, PsbX, PsbY, PsbZ, Psb30/Ycf12, at least 3 peripheral proteins of the oxygen-evolving complex and a large number of cofactors. It forms dimeric complexes. Requires The D1/D2 heterodimer binds P680, chlorophylls that are the primary electron donor of PSII, and subsequent electron acceptors. It shares a non-heme iron and each subunit binds pheophytin, quinone, additional chlorophylls, carotenoids and lipids. There is also a Cl(-1) ion associated with D1 and D2, which is required for oxygen evolution. The PSII complex binds additional chlorophylls, carotenoids and specific lipids. as cofactor.

The protein localises to the plastid. It localises to the chloroplast thylakoid membrane. The enzyme catalyses 2 a plastoquinone + 4 hnu + 2 H2O = 2 a plastoquinol + O2. Functionally, photosystem II (PSII) is a light-driven water:plastoquinone oxidoreductase that uses light energy to abstract electrons from H(2)O, generating O(2) and a proton gradient subsequently used for ATP formation. It consists of a core antenna complex that captures photons, and an electron transfer chain that converts photonic excitation into a charge separation. The D1/D2 (PsbA/PsbD) reaction center heterodimer binds P680, the primary electron donor of PSII as well as several subsequent electron acceptors. D2 is needed for assembly of a stable PSII complex. This is Photosystem II D2 protein from Heterosigma akashiwo (strain NIES-293 / 8280G21-1).